The chain runs to 256 residues: Deoxyribose-phosphate aldolase (256 aa).

The Proton donor/acceptor role is filled by Asp102. Lys165 (schiff-base intermediate with acetaldehyde) is an active-site residue. Lys197 (proton donor/acceptor) is an active-site residue.

This sequence belongs to the DeoC/FbaB aldolase family. DeoC type 2 subfamily.

It localises to the cytoplasm. It catalyses the reaction 2-deoxy-D-ribose 5-phosphate = D-glyceraldehyde 3-phosphate + acetaldehyde. It functions in the pathway carbohydrate degradation; 2-deoxy-D-ribose 1-phosphate degradation; D-glyceraldehyde 3-phosphate and acetaldehyde from 2-deoxy-alpha-D-ribose 1-phosphate: step 2/2. Its function is as follows. Catalyzes a reversible aldol reaction between acetaldehyde and D-glyceraldehyde 3-phosphate to generate 2-deoxy-D-ribose 5-phosphate. The chain is Deoxyribose-phosphate aldolase from Shewanella sp. (strain MR-7).